The chain runs to 156 residues: Small ribosomal subunit protein uS7 (156 aa).

This sequence belongs to the universal ribosomal protein uS7 family. In terms of assembly, part of the 30S ribosomal subunit. Contacts proteins S9 and S11.

Its function is as follows. One of the primary rRNA binding proteins, it binds directly to 16S rRNA where it nucleates assembly of the head domain of the 30S subunit. Is located at the subunit interface close to the decoding center, probably blocks exit of the E-site tRNA. This chain is Small ribosomal subunit protein uS7, found in Beijerinckia indica subsp. indica (strain ATCC 9039 / DSM 1715 / NCIMB 8712).